The primary structure comprises 173 residues: Crossover junction endodeoxyribonuclease RuvC (173 aa).

Active-site residues include Asp11, Glu71, and Asp143. Positions 11, 71, and 143 each coordinate Mg(2+).

The protein belongs to the RuvC family. As to quaternary structure, homodimer which binds Holliday junction (HJ) DNA. The HJ becomes 2-fold symmetrical on binding to RuvC with unstacked arms; it has a different conformation from HJ DNA in complex with RuvA. In the full resolvosome a probable DNA-RuvA(4)-RuvB(12)-RuvC(2) complex forms which resolves the HJ. Mg(2+) is required as a cofactor.

The protein localises to the cytoplasm. The catalysed reaction is Endonucleolytic cleavage at a junction such as a reciprocal single-stranded crossover between two homologous DNA duplexes (Holliday junction).. Functionally, the RuvA-RuvB-RuvC complex processes Holliday junction (HJ) DNA during genetic recombination and DNA repair. Endonuclease that resolves HJ intermediates. Cleaves cruciform DNA by making single-stranded nicks across the HJ at symmetrical positions within the homologous arms, yielding a 5'-phosphate and a 3'-hydroxyl group; requires a central core of homology in the junction. The consensus cleavage sequence is 5'-(A/T)TT(C/G)-3'. Cleavage occurs on the 3'-side of the TT dinucleotide at the point of strand exchange. HJ branch migration catalyzed by RuvA-RuvB allows RuvC to scan DNA until it finds its consensus sequence, where it cleaves and resolves the cruciform DNA. The chain is Crossover junction endodeoxyribonuclease RuvC from Brucella suis (strain ATCC 23445 / NCTC 10510).